Reading from the N-terminus, the 358-residue chain is Glutamate 5-kinase (358 aa).

ATP is bound at residue K9. S49, D136, and N148 together coordinate substrate. ATP contacts are provided by residues 168–169 (TD) and 210–216 (TGGMTTK). The PUA domain occupies 275–353 (DAAVEVDAGA…RAEGVLIHRN (79 aa)).

The protein belongs to the glutamate 5-kinase family.

The protein localises to the cytoplasm. It catalyses the reaction L-glutamate + ATP = L-glutamyl 5-phosphate + ADP. It functions in the pathway amino-acid biosynthesis; L-proline biosynthesis; L-glutamate 5-semialdehyde from L-glutamate: step 1/2. In terms of biological role, catalyzes the transfer of a phosphate group to glutamate to form L-glutamate 5-phosphate. The protein is Glutamate 5-kinase of Streptococcus suis (strain 05ZYH33).